A 523-amino-acid polypeptide reads, in one-letter code: Peptide chain release factor 3 (523 aa).

The region spanning 10–277 is the tr-type G domain; it reads NKRRTFAIIS…QFVDLAPAPG (268 aa). Residues 19-26, 87-91, and 141-144 contribute to the GTP site; these read SHPDAGKT, DTPGH, and NKLD.

The protein belongs to the TRAFAC class translation factor GTPase superfamily. Classic translation factor GTPase family. PrfC subfamily.

The protein resides in the cytoplasm. In terms of biological role, increases the formation of ribosomal termination complexes and stimulates activities of RF-1 and RF-2. It binds guanine nucleotides and has strong preference for UGA stop codons. It may interact directly with the ribosome. The stimulation of RF-1 and RF-2 is significantly reduced by GTP and GDP, but not by GMP. In Lactobacillus delbrueckii subsp. bulgaricus (strain ATCC BAA-365 / Lb-18), this protein is Peptide chain release factor 3.